The following is a 166-amino-acid chain: Small ribosomal subunit protein uS5 (166 aa).

Positions 11–74 (LVEKLVAVDR…EAARRNMITV (64 aa)) constitute an S5 DRBM domain.

Belongs to the universal ribosomal protein uS5 family. Part of the 30S ribosomal subunit. Contacts proteins S4 and S8.

With S4 and S12 plays an important role in translational accuracy. In terms of biological role, located at the back of the 30S subunit body where it stabilizes the conformation of the head with respect to the body. This is Small ribosomal subunit protein uS5 from Acinetobacter baumannii (strain ATCC 17978 / DSM 105126 / CIP 53.77 / LMG 1025 / NCDC KC755 / 5377).